The sequence spans 168 residues: Disulfide bond formation protein B (168 aa).

Over 1–11 (MSNPMRPVRSI) the chain is Cytoplasmic. Residues 12–28 (LLAIFTGCAGLIGYALY) form a helical membrane-spanning segment. Over 29-46 (LQLVENLLPCPLCVVQRM) the chain is Periplasmic. Cysteine 38 and cysteine 41 are disulfide-bonded. The helical transmembrane segment at 47 to 63 (AYWLIGLTALAGFFHTP) threads the bilayer. Residues 64-69 (ETTGRR) lie on the Cytoplasmic side of the membrane. The helical transmembrane segment at 70–87 (IYAGLMAVFAFTGGLVAL) threads the bilayer. The Periplasmic segment spans residues 88–143 (RQAWLVRYPEAFECGISPEEAFLNALPLARWWPVMFEANGDCADVTWKFASLTLPD). The cysteines at positions 101 and 129 are disulfide-linked. A helical membrane pass occupies residues 144 to 162 (WSAIFFMILAALSIYVLLV). The Cytoplasmic portion of the chain corresponds to 163–168 (RENQRE).

It belongs to the DsbB family.

The protein resides in the cell inner membrane. Its function is as follows. Required for disulfide bond formation in some periplasmic proteins. Acts by oxidizing the DsbA protein. This chain is Disulfide bond formation protein B, found in Nitrosospira multiformis (strain ATCC 25196 / NCIMB 11849 / C 71).